Here is a 271-residue protein sequence, read N- to C-terminus: Dipeptidyl-peptidase 6 (271 aa).

2 SH3b domains span residues methionine 1 to aspartate 64 and glutamine 72 to isoleucine 140. The NlpC/P60 domain maps to histidine 148–glycine 268. Cysteine 178 acts as the Nucleophile in catalysis. Histidine 224 functions as the Proton acceptor in the catalytic mechanism. Histidine 236 is an active-site residue.

This sequence belongs to the peptidase C40 family.

Its subcellular location is the cytoplasm. Involved in cell sporulation. Hydrolyzes gamma-D-Glu-L-(meso)A2pm linkages only in those peptide units that have a free N-terminal L-alanine. In Lysinibacillus sphaericus (Bacillus sphaericus), this protein is Dipeptidyl-peptidase 6.